Reading from the N-terminus, the 823-residue chain is Leucine--tRNA ligase (823 aa).

The 'HIGH' region motif lies at 41 to 51 (PYPSGTLHVGH). Residues 580-584 (KMSKS) carry the 'KMSKS' region motif. Residue Lys-583 participates in ATP binding.

Belongs to the class-I aminoacyl-tRNA synthetase family.

It is found in the cytoplasm. The catalysed reaction is tRNA(Leu) + L-leucine + ATP = L-leucyl-tRNA(Leu) + AMP + diphosphate. The protein is Leucine--tRNA ligase of Thermosipho melanesiensis (strain DSM 12029 / CIP 104789 / BI429).